The sequence spans 163 residues: Disulfide bond formation protein B (163 aa).

The Cytoplasmic segment spans residues 1–9; it reads MKKLTYRKI. Residues 10 to 26 form a helical membrane-spanning segment; it reads QSFQAIITVLVIFASFY. The Periplasmic segment spans residues 27-44; it reads LEYAAGLQPCPLCLMQRV. Cys-36 and Cys-39 form a disulfide bridge. The helical transmembrane segment at 45–58 threads the bilayer; that stretch reads CVFILLGLMGVSLG. Residues 59–64 lie on the Cytoplasmic side of the membrane; sequence TVKKAH. Residues 65–82 traverse the membrane as a helical segment; sequence IVSLIQFQVACAGLYFSL. Residues 83 to 139 lie on the Periplasmic side of the membrane; the sequence is RQLWLQSLPSDQAPACMPGLDVLIQYFPWQTVAKALFWGAGDCAEVTWTMFGVSMPG. Cys-98 and Cys-125 are disulfide-bonded. The helical transmembrane segment at 140–158 threads the bilayer; sequence WAAMYFLSMAIMGLFLFFR. The Cytoplasmic segment spans residues 159 to 163; sequence TRTIN.

Belongs to the DsbB family.

It is found in the cell inner membrane. Functionally, required for disulfide bond formation in some periplasmic proteins. Acts by oxidizing the DsbA protein. In Legionella pneumophila (strain Lens), this protein is Disulfide bond formation protein B.